A 1360-amino-acid polypeptide reads, in one-letter code: MAVQNRNSVLILSGRERGARMLGSQRLLQQLVEDRTRWMKWQSQKVELPDNPRSTFLLAFSPDRNLVASTHVNHNIYITDVKTGKCLHSLVGHRRTPWCVTFHPTIPGLVASGCLDGEVRIWDLHGGSESWFTESNVAIASLAFHPTAQLLLIATNNELHFWDWSRPEPFAVVKTASETERVRLVRFDPLGHNLLTAIVNPSNQQNEDDSEVPMDSMEMALFRQRSLLRSPPVRRTPILHNFLHILSSRSSGAQANDQSRPAPEPREPPSIPRFQYPVRTEPADRPALQGCTQHLGLGCLCSRCAASRNLFTQNPTGLQPSDSTQPQTQSGPSAFSPAPSQTRTSDRPSAFSSVFSGTAGNSAHRGLLPLRTIDPLGSQVPSHLEAPGRLPGADWSGSLLSTGHEHGLGAIGVETSSGRGVVPPPRTSSSSMDLLSLRRFPDGSSSSPIYTSATEGRGLVLPGTEPNRGRPNDGTSSGHHPFYDNTQRNNPASIRNVLQCNLSRYFMEYERMQELERPGGSREVAGGPGPMQELLTSSMDAERPGPSHNGSSHTGNGGAVATPSQNHPNRCRSCHNLLTFNHDTQRWERSGQTSSSSSSQEGPSWPLSVPPFEDPGQTARVEAQAPEMRPMELGEASSGLQGQQPMGLVYNQETGQWESVYRQPTVSASSEAAEDALNPEVPVDNPDEDSLRRRLLESSLFPFSRYDMSSSRDHPIYPDPARLSPAAYYAQRMIQYLSRRESIRQRSLQNRLRTLSNSQADSQSNNPSSVPPEASDGDYEDIEEPGDRTRHRMPRNARMSAPSLGRFVPRRFLLPEYLPYAGLFHERGQSGLATHSSINRVLAGASIGDGQSAVASNIANTTYRLQWWDFTKFDLPEISNATVNVLVPHCKIYNDASCDISADGQLLAVFIPSSQRGFADEGILAVYSLAPHNLGEMLYTKRFGPNAISVSLSPMGCYVMVGLASRRILLHPTTDHMVAQVFRLQQPHGGETSIRMMFNVVYPMAPDQRRHVSINSARWLPEPGMGLAYGTNKGDLVICRPVDFRSDGDNPSDLNADSLFTINSSSRTRGVERPGTSRSGWRFDRDMGLMNAIGLQPRQAAPSVTSQGTQTPVVRLQNAETQTERELPSASTFQNTHTTSRHTVQTASTSTERHTHPEMTHTLVQASVSEGSLNRTNLPATYHVESAAEPGTGEDALSRIRRLMAEGGMTAVVQRERSTTMASMGGFGNNIVVSHRIHRGSQTSVRTAQGGNPTPEMPAGLGVSTLFHTEPLVDSLEAPGPSGSSGAPLPTPFTNRSEFAGVSPMVESDLFGDRQPDDVQRRPSRGGLNMSNHSNNNNNDHSNSYSESRSRDYPDDLYGR.

WD repeat units follow at residues aspartate 50 to serine 89, glycine 92 to phenylalanine 132, and glutamate 134 to lysine 174. Polar residues predominate over residues arginine 249 to glutamine 258. 7 disordered regions span residues arginine 249 to proline 277, proline 315 to histidine 364, glycine 412 to asparagine 490, glutamate 514 to serine 573, tryptophan 587 to glycine 616, proline 664 to glutamate 688, and threonine 754 to asparagine 796. Low complexity predominate over residues glutamine 319 to serine 333. Polar residues predominate over residues alanine 350–asparagine 361. Residues serine 428 to leucine 437 show a composition bias toward low complexity. Composition is skewed to polar residues over residues glycine 443 to threonine 454 and aspartate 473 to asparagine 490. Low complexity predominate over residues serine 590–leucine 607. Positions threonine 754–serine 768 are enriched in polar residues. Residues serine 775–glutamate 784 are compositionally biased toward acidic residues. 2 short sequence motifs (TQT motif) span residues threonine 1109–threonine 1111 and threonine 1121–threonine 1123. 2 disordered regions span residues glutamate 1120–histidine 1142 and serine 1241–arginine 1360. 2 stretches are compositionally biased toward polar residues: residues serine 1129 to histidine 1142 and serine 1241 to asparagine 1252. A compositionally biased stretch (low complexity) spans alanine 1278–proline 1288. Over residues phenylalanine 1311 to arginine 1321 the composition is skewed to basic and acidic residues. A compositionally biased stretch (low complexity) spans asparagine 1329–glutamate 1347. A compositionally biased stretch (basic and acidic residues) spans serine 1348–arginine 1360.

The protein belongs to the WD repeat AMBRA1 family. In terms of assembly, component of the DCX(AMBRA1) E3 ubiquitin ligase complex.

It is found in the endoplasmic reticulum. The protein localises to the cytoplasm. It localises to the cytoskeleton. The protein resides in the cytoplasmic vesicle. Its subcellular location is the autophagosome. It is found in the mitochondrion. The protein localises to the cytosol. It localises to the nucleus. The protein resides in the cell junction. Its subcellular location is the focal adhesion. It functions in the pathway protein modification; protein ubiquitination. In terms of biological role, substrate-recognition component of a DCX (DDB1-CUL4-X-box) E3 ubiquitin-protein ligase complex involved in cell cycle control and autophagy. The DCX(AMBRA1) complex specifically mediates the polyubiquitination of target proteins. Acts as an upstream master regulator of the transition from G1 to S cell phase: ambra1b specifically recognizes and binds phosphorylated cyclin-D (ccnd1, ccnd2 and ccnd3), leading to cyclin-D ubiquitination by the DCX(AMBRA1) complex and subsequent degradation. Acts as a regulator of Cul5-RING (CRL5) E3 ubiquitin-protein ligase complexes by mediating ubiquitination and degradation of Elongin-C (eloc) component of CRL5 complexes. Acts as a key regulator of autophagy by modulating the BECN1-PIK3C3 complex: controls protein turnover during neuronal development, and regulates normal cell survival and proliferation. In normal conditions, ambra1b is tethered to the cytoskeleton via interaction with dyneins light chains. Upon autophagy induction, ambra1b is released from the cytoskeletal docking site to induce autophagosome nucleation by mediating ubiquitination of proteins involved in autophagy. Also acts as an activator of mitophagy. Required for skeletal muscle development. This is Activating molecule in BECN1-regulated autophagy protein 1B from Danio rerio (Zebrafish).